The chain runs to 500 residues: ATP synthase subunit alpha (500 aa).

Position 168-175 (168-175 (GDRQTGKT)) interacts with ATP.

The protein belongs to the ATPase alpha/beta chains family. In terms of assembly, F-type ATPases have 2 components, CF(1) - the catalytic core - and CF(0) - the membrane proton channel. CF(1) has five subunits: alpha(3), beta(3), gamma(1), delta(1), epsilon(1). CF(0) has three main subunits: a(1), b(2) and c(9-12). The alpha and beta chains form an alternating ring which encloses part of the gamma chain. CF(1) is attached to CF(0) by a central stalk formed by the gamma and epsilon chains, while a peripheral stalk is formed by the delta and b chains.

It is found in the cell membrane. The catalysed reaction is ATP + H2O + 4 H(+)(in) = ADP + phosphate + 5 H(+)(out). Produces ATP from ADP in the presence of a proton gradient across the membrane. The alpha chain is a regulatory subunit. The chain is ATP synthase subunit alpha from Streptococcus suis (strain 98HAH33).